Consider the following 212-residue polypeptide: MESTEKLTDTNAILAYLYETFPLCFIAEGETKPLKIGLFQDLAERLADDSKVSKTQLRIALRRYTSSWRYLKCVKAGAQRIDLDGNACGELEQEHIDHAAATLKESQDKAKAKRVAQAKSANPAAKTAKKPVKKPVAKRPKQTQSSKPAKEPVVAENLTPAVLAELKPKQRVNVKLGKSPVAGVILDIKKEDVQVQLDSGLTIKVRAEHILL.

The disordered stretch occupies residues 107–153 (QDKAKAKRVAQAKSANPAAKTAKKPVKKPVAKRPKQTQSSKPAKEPV). Low complexity predominate over residues 117 to 126 (QAKSANPAAK). Residues 127-141 (TAKKPVKKPVAKRPK) show a composition bias toward basic residues.

It belongs to the ProQ family.

The protein localises to the cytoplasm. RNA chaperone with significant RNA binding, RNA strand exchange and RNA duplexing activities. The polypeptide is RNA chaperone ProQ (Shewanella halifaxensis (strain HAW-EB4)).